The sequence spans 548 residues: Glucan endo-1,3-beta-glucosidase (548 aa).

Positions 1–36 (MPHDRKNSSRRAWAALCAAVLAVSGALVGVAAPASA) form a signal peptide, tat-type signal. Residues 38–396 (PATIPLTITN…PQAAYIKLDP (359 aa)) enclose the GH64 domain. The active-site Proton donor is the Glu153. Asp169 serves as the catalytic Proton acceptor. The Ricin B-type lectin domain occupies 422-548 (GTGALRIGST…NQTEAQRWTL (127 aa)).

The protein belongs to the glycosyl hydrolase 64 family. In terms of processing, predicted to be exported by the Tat system. The position of the signal peptide cleavage has not been experimentally proven.

The protein localises to the periplasm. It carries out the reaction Hydrolysis of (1-&gt;3)-beta-D-glucosidic linkages in (1-&gt;3)-beta-D-glucans.. Lysis of cellular walls containing beta-1,3-glucans. Implicated in the defense against fungal pathogens. The protein is Glucan endo-1,3-beta-glucosidase (glcI) of Arthrobacter sp. (strain YCWD3).